A 312-amino-acid chain; its full sequence is Malate dehydrogenase (312 aa).

Residues 12-17 (GAGFTG) and Asp36 contribute to the NAD(+) site. Substrate-binding residues include Arg87 and Arg93. NAD(+) contacts are provided by residues Asn100 and 123–125 (LTN). A substrate-binding site is contributed by Asn125. Ser149 bears the Phosphoserine mark. Position 156 (Arg156) interacts with substrate. His180 functions as the Proton acceptor in the catalytic mechanism.

The protein belongs to the LDH/MDH superfamily. MDH type 3 family.

The catalysed reaction is (S)-malate + NAD(+) = oxaloacetate + NADH + H(+). Functionally, catalyzes the reversible oxidation of malate to oxaloacetate. This Bacillus anthracis (strain A0248) protein is Malate dehydrogenase.